The primary structure comprises 336 residues: Ribosomal RNA small subunit methyltransferase C (336 aa).

This sequence belongs to the methyltransferase superfamily. RsmC family. Monomer.

It localises to the cytoplasm. The enzyme catalyses guanosine(1207) in 16S rRNA + S-adenosyl-L-methionine = N(2)-methylguanosine(1207) in 16S rRNA + S-adenosyl-L-homocysteine + H(+). Its function is as follows. Specifically methylates the guanine in position 1207 of 16S rRNA in the 30S particle. This Buchnera aphidicola subsp. Schizaphis graminum (strain Sg) protein is Ribosomal RNA small subunit methyltransferase C.